The chain runs to 397 residues: ATP-dependent RNA helicase eIF4A (397 aa).

The Q motif signature appears at 24-52 (DSFDEMNLKPELLRGIYAYGFERPSAIQQ). Residues 55-225 (IMPVIKGHDV…TKFMREPVRI (171 aa)) form the Helicase ATP-binding domain. ATP is bound at residue 68–75 (AQSGTGKT). Positions 173 to 176 (DEAD) match the DEAD box motif. The 162-residue stretch at 236–397 (GIKQFYIAVE…EMPMNVADLI (162 aa)) folds into the Helicase C-terminal domain.

This sequence belongs to the DEAD box helicase family. eIF4A subfamily. In terms of assembly, component of the eIF4F complex, which composition varies with external and internal environmental conditions. It is composed of at least eIF4A, eIF4E and eIF4G.

The protein resides in the cytoplasm. It catalyses the reaction ATP + H2O = ADP + phosphate + H(+). Functionally, ATP-dependent RNA helicase which is a subunit of the eIF4F complex involved in cap recognition and is required for mRNA binding to ribosome. In the current model of translation initiation, eIF4A unwinds RNA secondary structures in the 5'-UTR of mRNAs which is necessary to allow efficient binding of the small ribosomal subunit, and subsequent scanning for the initiator codon. This chain is ATP-dependent RNA helicase eIF4A (tif-1), found in Neurospora crassa (strain ATCC 24698 / 74-OR23-1A / CBS 708.71 / DSM 1257 / FGSC 987).